A 311-amino-acid polypeptide reads, in one-letter code: MPAGRKWSYPMYNLTGLELKNPTILAAGVLGTTGASLCRVAREGGAGAVVTKSIGPAPKTGHSNPSMIKLDCGFLNAMGLPNPSYPGFLQELEFAKNNSAVPVIASIFGGAPSEFAEVAEGLLPAKPDALELNVSCPHAEGYGAAVGSNPCLVEAVTAAVKDVVNVPVWVKLTPNVADITCIGNAAESGGADAVVAINTVKGMAIDIESGYPVLGNRSGGLSGKAVKPVAVKCVYDLYTALEIPVIGVGGVSSWEDAVELMMAGAAAVQVGSAVYDRVDIFSEIGAGIEAFLERKGYSDIQKIIGLSHEMV.

Residues Lys-52, 76 to 80 (NAMGL), and Asn-133 each bind substrate. 52–53 (KS) contributes to the FMN binding site. FMN is bound at residue Asn-133. Residue Cys-136 is the Nucleophile of the active site. FMN-binding residues include Lys-171 and Ile-197. 198 to 199 (NT) lines the substrate pocket. FMN is bound by residues Gly-223, 249–250 (GG), and 271–272 (GS).

Belongs to the dihydroorotate dehydrogenase family. Type 1 subfamily. In terms of assembly, heterotetramer of 2 PyrK and 2 PyrD type B subunits. Requires FMN as cofactor.

Its subcellular location is the cytoplasm. It catalyses the reaction (S)-dihydroorotate + NAD(+) = orotate + NADH + H(+). Its pathway is pyrimidine metabolism; UMP biosynthesis via de novo pathway; orotate from (S)-dihydroorotate (NAD(+) route): step 1/1. Its function is as follows. Catalyzes the conversion of dihydroorotate to orotate with NAD(+) as electron acceptor. This chain is Dihydroorotate dehydrogenase B (NAD(+)), catalytic subunit (pyrD), found in Methanosarcina acetivorans (strain ATCC 35395 / DSM 2834 / JCM 12185 / C2A).